Here is a 234-residue protein sequence, read N- to C-terminus: Carboxy-S-adenosyl-L-methionine synthase (234 aa).

S-adenosyl-L-methionine is bound by residues tyrosine 35, 60-62 (GCS), 83-84 (DN), 109-110 (DI), asparagine 124, and arginine 191.

Belongs to the class I-like SAM-binding methyltransferase superfamily. Cx-SAM synthase family. As to quaternary structure, homodimer.

The enzyme catalyses prephenate + S-adenosyl-L-methionine = carboxy-S-adenosyl-L-methionine + 3-phenylpyruvate + H2O. Functionally, catalyzes the conversion of S-adenosyl-L-methionine (SAM) to carboxy-S-adenosyl-L-methionine (Cx-SAM). The polypeptide is Carboxy-S-adenosyl-L-methionine synthase (Campylobacter concisus (strain 13826)).